Consider the following 348-residue polypeptide: Phenylalanine--tRNA ligase alpha subunit (348 aa).

Residue glutamate 262 coordinates Mg(2+).

This sequence belongs to the class-II aminoacyl-tRNA synthetase family. Phe-tRNA synthetase alpha subunit type 1 subfamily. Tetramer of two alpha and two beta subunits. Mg(2+) serves as cofactor.

The protein localises to the cytoplasm. The catalysed reaction is tRNA(Phe) + L-phenylalanine + ATP = L-phenylalanyl-tRNA(Phe) + AMP + diphosphate + H(+). The sequence is that of Phenylalanine--tRNA ligase alpha subunit from Streptococcus pneumoniae (strain JJA).